A 491-amino-acid polypeptide reads, in one-letter code: Hydroxymethylglutaryl-CoA synthase (491 aa).

The Proton donor/acceptor role is filled by Glu-127. Cys-159 serves as the catalytic Acyl-thioester intermediate. Cys-159, Thr-201, and Ser-250 together coordinate (3S)-3-hydroxy-3-methylglutaryl-CoA. Ser-276 carries the post-translational modification Phosphoserine. Residue His-296 is the Proton donor/acceptor of the active site. His-296, Lys-305, Asn-371, and Ser-405 together coordinate (3S)-3-hydroxy-3-methylglutaryl-CoA.

It belongs to the thiolase-like superfamily. HMG-CoA synthase family.

The enzyme catalyses acetoacetyl-CoA + acetyl-CoA + H2O = (3S)-3-hydroxy-3-methylglutaryl-CoA + CoA + H(+). It functions in the pathway metabolic intermediate biosynthesis; (R)-mevalonate biosynthesis; (R)-mevalonate from acetyl-CoA: step 2/3. In terms of biological role, hydroxymethylglutaryl-CoA synthase; part of the first module of ergosterol biosynthesis pathway that includes the early steps of the pathway, conserved across all eukaryotes, and which results in the formation of mevalonate from acetyl-coenzyme A (acetyl-CoA). ERG13 condenses acetyl-CoA with acetoacetyl-CoA to form hydroxymethylglutaryl-CoA (HMG-CoA). The first module starts with the action of the cytosolic acetyl-CoA acetyltransferase ERG10 that catalyzes the formation of acetoacetyl-CoA. The hydroxymethylglutaryl-CoA synthase ERG13 then condenses acetyl-CoA with acetoacetyl-CoA to form HMG-CoA. The rate-limiting step of the early module is the reduction to mevalonate by the 3-hydroxy-3-methylglutaryl-coenzyme A (HMG-CoA) reductases HMG1 and HMG2 which are derived from a single ancestral HMGR gene by gene duplication. This Saccharomyces cerevisiae (strain ATCC 204508 / S288c) (Baker's yeast) protein is Hydroxymethylglutaryl-CoA synthase.